The primary structure comprises 245 residues: 1-(5-phosphoribosyl)-5-[(5-phosphoribosylamino)methylideneamino] imidazole-4-carboxamide isomerase (245 aa).

The active-site Proton acceptor is the D7. The Proton donor role is filled by D129.

It belongs to the HisA/HisF family.

It localises to the cytoplasm. The enzyme catalyses 1-(5-phospho-beta-D-ribosyl)-5-[(5-phospho-beta-D-ribosylamino)methylideneamino]imidazole-4-carboxamide = 5-[(5-phospho-1-deoxy-D-ribulos-1-ylimino)methylamino]-1-(5-phospho-beta-D-ribosyl)imidazole-4-carboxamide. It functions in the pathway amino-acid biosynthesis; L-histidine biosynthesis; L-histidine from 5-phospho-alpha-D-ribose 1-diphosphate: step 4/9. This chain is 1-(5-phosphoribosyl)-5-[(5-phosphoribosylamino)methylideneamino] imidazole-4-carboxamide isomerase, found in Salmonella choleraesuis (strain SC-B67).